A 408-amino-acid chain; its full sequence is Gustatory receptor 10a (408 aa).

The Cytoplasmic segment spans residues Met-1–Arg-20. A helical membrane pass occupies residues Tyr-21 to Pro-38. Residues Gln-39–Val-48 are Extracellular-facing. A helical membrane pass occupies residues Leu-49–Phe-69. Residues Cys-70–Leu-86 are Cytoplasmic-facing. Residues Leu-87–Val-107 traverse the membrane as a helical segment. Residues Ala-108–Phe-144 are Extracellular-facing. The helical transmembrane segment at Phe-145–Phe-165 threads the bilayer. Over Ala-166–Gln-270 the chain is Cytoplasmic. A helical transmembrane segment spans residues Leu-271–His-291. The Extracellular segment spans residues Met-292–Pro-304. Residues Val-305–Ile-325 form a helical membrane-spanning segment. Over Asn-326–Arg-381 the chain is Cytoplasmic. The chain crosses the membrane as a helical span at residues Leu-382–Leu-402. At Tyr-403 to Ser-408 the chain is on the extracellular side.

This sequence belongs to the insect chemoreceptor superfamily. Gustatory receptor (GR) family. Gr10a subfamily. As to expression, expressed in the medial aspect of the third antennal segment, and in neurons of the terminal external chemosensory organ of larvae.

Its subcellular location is the cell membrane. Functionally, probable gustatory receptor which mediates acceptance or avoidance behavior, depending on its substrates. This chain is Gustatory receptor 10a (Gr10a), found in Drosophila melanogaster (Fruit fly).